Here is a 268-residue protein sequence, read N- to C-terminus: Enoyl-[acyl-carrier-protein] reductase [NADH] 2 (268 aa).

NAD(+) contacts are provided by residues Gly14, 20–21 (SI), Gln41, 65–66 (DV), and Ile93. Residues Tyr146 and Tyr156 each act as proton acceptor in the active site. Residues Lys163 and 192–196 (IRTLA) contribute to the NAD(+) site.

Belongs to the short-chain dehydrogenases/reductases (SDR) family. FabI subfamily.

The protein resides in the cell inner membrane. The enzyme catalyses a 2,3-saturated acyl-[ACP] + NAD(+) = a (2E)-enoyl-[ACP] + NADH + H(+). The protein operates within lipid metabolism; fatty acid biosynthesis. The sequence is that of Enoyl-[acyl-carrier-protein] reductase [NADH] 2 (fabI2) from Rhizobium meliloti (strain 1021) (Ensifer meliloti).